A 505-amino-acid chain; its full sequence is Deoxyguanosinetriphosphate triphosphohydrolase (505 aa).

Positions 66–273 (RLTHSMEVQQ…MEAADDISYC (208 aa)) constitute an HD domain.

Belongs to the dGTPase family. Type 1 subfamily. Homotetramer. Mg(2+) is required as a cofactor.

It carries out the reaction dGTP + H2O = 2'-deoxyguanosine + triphosphate + H(+). DGTPase preferentially hydrolyzes dGTP over the other canonical NTPs. This chain is Deoxyguanosinetriphosphate triphosphohydrolase, found in Escherichia coli O127:H6 (strain E2348/69 / EPEC).